Here is a 69-residue protein sequence, read N- to C-terminus: Protein transport protein Sec61 subunit gamma-1 (69 aa).

Met1 is modified (N-acetylmethionine). The Cytoplasmic portion of the chain corresponds to 1–32; it reads MDAIDSVVDPLRDFAKDSIRLVKRCHKPDRKE. The chain crosses the membrane as a helical span at residues 33–61; sequence FTKVAVRTAIGFVVMGFVGFFVKLIFIPI. Over 62–69 the chain is Extracellular; the sequence is NNIIVGAT.

It belongs to the SecE/SEC61-gamma family. Heterotrimeric complex composed of SEC61-alpha, SEC61-beta and SEC61-gamma.

It localises to the endoplasmic reticulum membrane. In terms of biological role, necessary for protein translocation in the endoplasmic reticulum. This Arabidopsis thaliana (Mouse-ear cress) protein is Protein transport protein Sec61 subunit gamma-1 (SEC61G1).